Reading from the N-terminus, the 467-residue chain is MGQKFWENQEDRAMVESTIGSEACDFFISTASASNTALSKLVSPPSDSNLQQGLRHVVEGSDWDYALFWLASNVNSSDGCVLIWGDGHCRVKKGASGEDYSQQDEIKRRVLRKLHLSFVGSDEDHRLVKSGALTDLDMFYLASLYFSFRCDTNKYGPAGTYVSGKPLWAADLPSCLSYYRVRSFLARSAGFQTVLSVPVNSGVVELGSLRHIPEDKSVIEMVKSVFGGSDFVQAKEAPKIFGRQLSLGGAKPRSMSINFSPKTEDDTGFSLESYEVQAIGGSNQVYGYEQGKDETLYLTDEQKPRKRGRKPANGREEALNHVEAERQRREKLNQRFYALRAVVPNISKMDKASLLADAITYITDMQKKIRVYETEKQIMKRRESNQITPAEVDYQQRHDDAVVRLSCPLETHPVSKVIQTLRENEVMPHDSNVAITEEGVVHTFTLRPQGGCTAEQLKDKLLASLSQ.

Positions 316–365 (EEALNHVEAERQRREKLNQRFYALRAVVPNISKMDKASLLADAITYITDM) constitute a bHLH domain.

Homodimer.

Its subcellular location is the nucleus. This is Transcription factor bHLH3 (BHLH3) from Arabidopsis thaliana (Mouse-ear cress).